We begin with the raw amino-acid sequence, 92 residues long: Large ribosomal subunit protein bL27 (92 aa).

A propeptide spanning residues Met1–Phe9 is cleaved from the precursor. The interval Gly14 to Ala34 is disordered.

It belongs to the bacterial ribosomal protein bL27 family. Post-translationally, the N-terminus is cleaved by ribosomal processing cysteine protease Prp.

The chain is Large ribosomal subunit protein bL27 from Exiguobacterium sibiricum (strain DSM 17290 / CCUG 55495 / CIP 109462 / JCM 13490 / 255-15).